We begin with the raw amino-acid sequence, 506 residues long: Maturase K (506 aa).

The protein belongs to the intron maturase 2 family. MatK subfamily.

The protein resides in the plastid. Its subcellular location is the chloroplast. Its function is as follows. Usually encoded in the trnK tRNA gene intron. Probably assists in splicing its own and other chloroplast group II introns. This chain is Maturase K, found in Atractylodes lancea (Atractylodes japonica).